We begin with the raw amino-acid sequence, 555 residues long: MDIKRTVLWVIFFMSAVMLYDNWQRSHGRPSMFFPSATQTAPAAAAGGASGTGATTTTAGEVPAAAAGAAPSTTAPAAQAQLVKFSTDVYDGEIDTRGGTLAKLTLKKQGDGKQPDLYITLFDHTAGHTYLARSGLLGGDFPNHNDVYTQLNPGTTSLTGDQNALKLSFESPVKGGVKVVKTYTFTRGSYVIGVDTKIDNVGTAPVTPTVYMELVRDNTAVETPMFSHTFLGPAVYTDAKHFQKINFSDLDKNKADYVTSADNGWVAMVQHYFASAWIPQQGVKRDIYAEKIDPTLYRVGVKQPVAAIAPGQSADVQARLFAGPEEERMLEGIAPGLELVKDYGWVTIIAKPLFWLLEKIHSYIGNWGWSIVLLTLLIKAVFFPLSAASYKSMARMKEITPRMQALRERFKSDPQKMNSALMELYKTEKVNPFGGCLPVVIQIPVFISLYWVLLASVEMRGAPWVLWIHDLSQRDPFFILPVLMAVSMYVQTSLNPTPPDPVQAKMMKFMPIAFSVMFFFFPAGLVLYYVVNNVLSIAQQYYITRKLGGAKKKPA.

Transmembrane regions (helical) follow at residues 7–24 (VLWV…DNWQ), 367–387 (WGWS…PLSA), 437–457 (LPVV…LASV), 476–496 (PFFI…SLNP), and 511–531 (PIAF…YYVV).

This sequence belongs to the OXA1/ALB3/YidC family. Type 1 subfamily. Interacts with the Sec translocase complex via SecD. Specifically interacts with transmembrane segments of nascent integral membrane proteins during membrane integration.

The protein localises to the cell inner membrane. Functionally, required for the insertion and/or proper folding and/or complex formation of integral membrane proteins into the membrane. Involved in integration of membrane proteins that insert both dependently and independently of the Sec translocase complex, as well as at least some lipoproteins. Aids folding of multispanning membrane proteins. This Burkholderia lata (strain ATCC 17760 / DSM 23089 / LMG 22485 / NCIMB 9086 / R18194 / 383) protein is Membrane protein insertase YidC.